We begin with the raw amino-acid sequence, 438 residues long: Serine hydroxymethyltransferase (438 aa).

(6S)-5,6,7,8-tetrahydrofolate-binding positions include Leu133 and 137-139 (GHL). Lys242 is subject to N6-(pyridoxal phosphate)lysine.

This sequence belongs to the SHMT family. As to quaternary structure, homodimer. Pyridoxal 5'-phosphate serves as cofactor.

The protein localises to the cytoplasm. The catalysed reaction is (6R)-5,10-methylene-5,6,7,8-tetrahydrofolate + glycine + H2O = (6S)-5,6,7,8-tetrahydrofolate + L-serine. The protein operates within one-carbon metabolism; tetrahydrofolate interconversion. It functions in the pathway amino-acid biosynthesis; glycine biosynthesis; glycine from L-serine: step 1/1. In terms of biological role, catalyzes the reversible interconversion of serine and glycine with tetrahydrofolate (THF) serving as the one-carbon carrier. This reaction serves as the major source of one-carbon groups required for the biosynthesis of purines, thymidylate, methionine, and other important biomolecules. Also exhibits THF-independent aldolase activity toward beta-hydroxyamino acids, producing glycine and aldehydes, via a retro-aldol mechanism. In Brucella ovis (strain ATCC 25840 / 63/290 / NCTC 10512), this protein is Serine hydroxymethyltransferase.